The chain runs to 504 residues: 6,7,8-trihydroxycoumarin synthase (504 aa).

A helical membrane pass occupies residues 1–21 (MEPVFLFLILAFPIASVYLLF). The substrate specificity stretch occupies residues 363 to 368 (PAPVLV). Cys444 is a binding site for heme.

It belongs to the cytochrome P450 family. Heme is required as a cofactor.

The protein resides in the microsome membrane. Its pathway is secondary metabolite biosynthesis. In terms of biological role, involved in the biosynthesis of coumarins and furanocoumarins (FCs), natural products required for defense responses against attacks by predators with potential medical and agroindustrial usages such as anticoagulant, rodenticide and artificial vanilla substitutes. Able to catalyze the hydroxylation of esculetin to produce 6,7,8-trihydroxycoumarin. This Pastinaca sativa (Wild parsnip) protein is 6,7,8-trihydroxycoumarin synthase.